The primary structure comprises 251 residues: Lactose phosphotransferase system repressor (251 aa).

One can recognise an HTH deoR-type domain in the interval 3-58 (KHERLDEIAKLVNKKGTIRTNEIVEGLNVSDMTVRRDLIELENKGILTKIHGGARS). The segment at residues 20–39 (IRTNEIVEGLNVSDMTVRRD) is a DNA-binding region (H-T-H motif).

In terms of biological role, repressor of the lactose catabolism operon. Galactose-6-phosphate is the inducer. The chain is Lactose phosphotransferase system repressor (lacR) from Staphylococcus aureus (strain N315).